A 299-amino-acid polypeptide reads, in one-letter code: ATP synthase gamma chain (299 aa).

The protein belongs to the ATPase gamma chain family. F-type ATPases have 2 components, CF(1) - the catalytic core - and CF(0) - the membrane proton channel. CF(1) has five subunits: alpha(3), beta(3), gamma(1), delta(1), epsilon(1). CF(0) has three main subunits: a, b and c.

The protein resides in the cell membrane. In terms of biological role, produces ATP from ADP in the presence of a proton gradient across the membrane. The gamma chain is believed to be important in regulating ATPase activity and the flow of protons through the CF(0) complex. The chain is ATP synthase gamma chain from Clavibacter sepedonicus (Clavibacter michiganensis subsp. sepedonicus).